A 323-amino-acid chain; its full sequence is Putative CRISPR-associated protein SSO1401 (323 aa).

As to quaternary structure, sometimes seen associated with the aCascade ribonucleoprotein complex, minimally composed of Csa2 and Cas5a, which binds crRNA. Other probable components of aCascade in strain P1 are Cas6 and Csa5, while SSO1399, Cas5b (SSO1400) and SSO1401 have sometimes been seen weakly associated. The Csa2-Cas5a-crRNA complex also binds target DNA homologous to crRNA, probably forming an R-loop. Purified aCascade forms a filament about 6 nm in width.

CRISPR (clustered regularly interspaced short palindromic repeat) is an adaptive immune system that provides protection against mobile genetic elements (viruses, transposable elements and conjugative plasmids). CRISPR clusters contain spacers, sequences complementary to antecedent mobile elements, and target invading nucleic acids. CRISPR clusters are transcribed and processed into CRISPR RNA (crRNA). This chain is Putative CRISPR-associated protein SSO1401, found in Saccharolobus solfataricus (strain ATCC 35092 / DSM 1617 / JCM 11322 / P2) (Sulfolobus solfataricus).